Here is a 514-residue protein sequence, read N- to C-terminus: Putative thymidine phosphorylase (514 aa).

The protein belongs to the thymidine/pyrimidine-nucleoside phosphorylase family. Type 2 subfamily.

It catalyses the reaction thymidine + phosphate = 2-deoxy-alpha-D-ribose 1-phosphate + thymine. The chain is Putative thymidine phosphorylase from Rhodopseudomonas palustris (strain ATCC BAA-98 / CGA009).